Consider the following 638-residue polypeptide: Chaperone protein DnaK (638 aa).

Thr199 is subject to Phosphothreonine; by autocatalysis. A compositionally biased stretch (low complexity) spans 603–618; it reads YAQPGAEAGAEQQGSA. The interval 603-638 is disordered; that stretch reads YAQPGAEAGAEQQGSANNADDDIVDAEFEEVNDDKK. The span at 621–638 shows a compositional bias: acidic residues; sequence ADDDIVDAEFEEVNDDKK.

The protein belongs to the heat shock protein 70 family.

Its function is as follows. Acts as a chaperone. This is Chaperone protein DnaK from Hydrogenovibrio crunogenus (strain DSM 25203 / XCL-2) (Thiomicrospira crunogena).